The chain runs to 1104 residues: Receptor-type guanylate cyclase gcy-15 (1104 aa).

Residues 1-431 (MEIAINRLNA…ENCGPPANNT (431 aa)) lie on the Extracellular side of the membrane. 6 N-linked (GlcNAc...) asparagine glycosylation sites follow: asparagine 43, asparagine 237, asparagine 263, asparagine 287, asparagine 407, and asparagine 429. The chain crosses the membrane as a helical span at residues 432-452 (FIIVISVGVAVLIGLAIAAAF). Residues 453–1104 (LYKRYRYERR…QIQEKTYEFS (652 aa)) are Cytoplasmic-facing. Residues 528–823 (FNTGSTARAG…QIKRKLKPLT (296 aa)) enclose the Protein kinase domain. Residues 534–542 (ARAGPFGPI) and lysine 576 each bind ATP. Residues 838–871 (IEKYTDKLEKDIAERNEELEAEKAKSEALLKMML) are a coiled coil. The Guanylate cyclase domain maps to 894–1024 (TVFFSDCPGF…DTVNTASRME (131 aa)).

The protein belongs to the adenylyl cyclase class-4/guanylyl cyclase family. In terms of tissue distribution, expressed bilaterally in ASG sensory neurons.

It localises to the cell membrane. The enzyme catalyses GTP = 3',5'-cyclic GMP + diphosphate. Functionally, guanylate cyclase involved in the production of the second messenger cGMP. The sequence is that of Receptor-type guanylate cyclase gcy-15 from Caenorhabditis elegans.